The primary structure comprises 84 residues: Exodeoxyribonuclease 7 small subunit (84 aa).

This sequence belongs to the XseB family. Heterooligomer composed of large and small subunits.

The protein localises to the cytoplasm. It carries out the reaction Exonucleolytic cleavage in either 5'- to 3'- or 3'- to 5'-direction to yield nucleoside 5'-phosphates.. Functionally, bidirectionally degrades single-stranded DNA into large acid-insoluble oligonucleotides, which are then degraded further into small acid-soluble oligonucleotides. In Azoarcus sp. (strain BH72), this protein is Exodeoxyribonuclease 7 small subunit.